Here is a 780-residue protein sequence, read N- to C-terminus: Pumilio domain-containing protein C4G8.03c (780 aa).

Disordered stretches follow at residues 1–29, 298–330, and 358–411; these read MVNRDAYNELNLNKKSQETNRKPSPLSSY, LSHFPDHLDPSRIPSPYQPSSLQPLESRKLHSK, and NHHS…GKTV. Residues 298–307 are compositionally biased toward basic and acidic residues; it reads LSHFPDHLDP. Low complexity predominate over residues 311 to 322; sequence PSPYQPSSLQPL. Positions 358-382 are enriched in polar residues; it reads NHHSSLSMDNDPTNVSTKNRNNQTV. Residues 435–778 enclose the PUM-HD domain; sequence EKSDDLSNLL…HILAKLTSST (344 aa). Pumilio repeat units follow at residues 462–497, 498–533, 534–569, 570–606, 607–642, 643–678, 679–714, 715–752, and 753–780; these read GFLGHLSTICKDQYGCRYLQKLLDENPKVNASLFFP, EIRQSVVQLMIDPFGNYMCQKLFVYASREQKLSMLN, GIGEGIVDICSNLYGTRSMQNIIDKLTSNEQISLLL, KIIIPSLTTLACDNNGTHVLQKCIAKFPPEKLEPLFL, SMEENLITLATNRHGCCILQRCLDRTNGDIQERLVN, SIIKSCLLLVQNAYGNYLVQHVLELNIQPYTERIIE, KFFGNICKLSLQKFSSNAIEQCIRTASPSTREQMLQ, EFLSFPNIEQLLDDCYANYVMQRFLNVADESQKFLILR, and SISHVIPKIQNTRHGRHILAKLTSSTSS.

This chain is Pumilio domain-containing protein C4G8.03c, found in Schizosaccharomyces pombe (strain 972 / ATCC 24843) (Fission yeast).